Reading from the N-terminus, the 89-residue chain is Small ribosomal subunit protein uS17 (89 aa).

It belongs to the universal ribosomal protein uS17 family. As to quaternary structure, part of the 30S ribosomal subunit.

Its function is as follows. One of the primary rRNA binding proteins, it binds specifically to the 5'-end of 16S ribosomal RNA. This Chlorobaculum tepidum (strain ATCC 49652 / DSM 12025 / NBRC 103806 / TLS) (Chlorobium tepidum) protein is Small ribosomal subunit protein uS17.